Here is a 904-residue protein sequence, read N- to C-terminus: Copper-transporting ATPase ccc2 (904 aa).

At 1-172 (MYTTTLSVQG…GSQIRVWKIR (172 aa)) the chain is on the cytoplasmic side. Positions 2 to 68 (YTTTLSVQGM…KIEDCGFDAS (67 aa)) constitute an HMA domain. Cu(+) contacts are provided by Cys13 and Cys16. Residues 173 to 193 (FIISISFSLAVMFLPQIFDSC) form a helical membrane-spanning segment. Topologically, residues 194-197 (DSMR) are lumenal, vesicle. The chain crosses the membrane as a helical span at residues 198–218 (AAFLVPHYFGICAGHIISLVL). Residues 219 to 246 (SLPVQFGVGRVYYSAAYHALKRGTANMD) lie on the Cytoplasmic side of the membrane. Residues 247–267 (VLVSLGSTVAFAASIFFMILY) traverse the membrane as a helical segment. Residues 268-278 (SARHADNPAPI) are Lumenal, vesicle-facing. Residues 279–296 (FFDTADMLLTFVTLGRYL) form a helical membrane-spanning segment. Topologically, residues 297 to 431 (ESKAKGSTSA…PIQQFADRVA (135 aa)) are cytoplasmic. Residues 432 to 452 (GIFVPVIVALSISTFTFWFLF) form a helical membrane-spanning segment. Residues 453–469 (TKYSSKYPSVFDDPMGK) lie on the Lumenal, vesicle side of the membrane. A helical transmembrane segment spans residues 470–490 (FAVCLKLTISVVVVACPCALG). Topologically, residues 491 to 805 (LSTPTAVMVG…RIKMNLVWAC (315 aa)) are cytoplasmic. The active-site 4-aspartylphosphate intermediate is Asp529. Mg(2+) contacts are provided by Asp742 and Asp746. A helical membrane pass occupies residues 806 to 826 (IYNFVMIPIAMGFFLPWGIYL). At 827–828 (NP) the chain is on the lumenal, vesicle side. A helical transmembrane segment spans residues 829-849 (MWASAAMMFSSLSVLASSLLL). The Cytoplasmic portion of the chain corresponds to 850–904 (RRWKKPKSLIFSEADDVETESSTNSSVLQKVYTATRSIFGRNKSSNKYQPVANEV).

Belongs to the cation transport ATPase (P-type) (TC 3.A.3) family. Type IB subfamily.

The protein localises to the golgi apparatus. It is found in the trans-Golgi network membrane. It catalyses the reaction Cu(+)(in) + ATP + H2O = Cu(+)(out) + ADP + phosphate + H(+). Functionally, probably involved in copper transport and in the regulation of cellular copper level. Retrieves copper from the metallochaperone atx1 and incorporates it into trans-Golgi vesicles. The polypeptide is Copper-transporting ATPase ccc2 (ccc2) (Schizosaccharomyces pombe (strain 972 / ATCC 24843) (Fission yeast)).